The chain runs to 339 residues: Cyclin-D1-1 (339 aa).

It belongs to the cyclin family. Cyclin D subfamily. As to quaternary structure, interacts with CDKA-1 and KRP6/ICK4. As to expression, expressed in roots, leaves and flowers.

Functionally, may activate cell cycle in the root apical meristem (RAM) and promote embryonic root (radicle) protrusion. The polypeptide is Cyclin-D1-1 (CYCD1-1) (Arabidopsis thaliana (Mouse-ear cress)).